Consider the following 489-residue polypeptide: Penton protein (489 aa).

The protein belongs to the adenoviridae penton family. Interacts with the fiber protein (via N-terminal tail region). Interacts with the capsid vertex protein; this interaction binds the penton base to neighboring peripentonal hexons.

It is found in the virion. Its subcellular location is the host nucleus. Functionally, major capsid protein that self-associates to form penton base pentamers, each in the shape of a pentagon, situated at the 12 vertices of the pseudo T=25 capsid. Involved in virus secondary attachment to host cell after initial attachment by the fiber protein, and in endocytosis of virions. As the virus enters the host cell, penton proteins are shed concomitant with virion acidification in the endosome. In Murine adenovirus A serotype 1 (MAdV-1), this protein is Penton protein.